The following is a 125-amino-acid chain: Small ribosomal subunit protein uS11 (125 aa).

The segment at 101-125 (KDVKDVTPTPHNGTRPPKKILKREK) is disordered. Residues 116–125 (PPKKILKREK) are compositionally biased toward basic residues.

The protein belongs to the universal ribosomal protein uS11 family. In terms of assembly, part of the 30S ribosomal subunit. Interacts with proteins S7 and S18. Binds to IF-3.

Functionally, located on the platform of the 30S subunit, it bridges several disparate RNA helices of the 16S rRNA. Forms part of the Shine-Dalgarno cleft in the 70S ribosome. In Mycoplasma sp, this protein is Small ribosomal subunit protein uS11.